Reading from the N-terminus, the 261-residue chain is Proteasome subunit alpha type-4 (261 aa).

Residues Ser-13 and Ser-75 each carry the phosphoserine modification. An N6-acetyllysine modification is found at Lys-127. Ser-173 carries the post-translational modification Phosphoserine. At Lys-176 the chain carries N6-acetyllysine. The interval 240–261 is disordered; the sequence is HEEEEAKAEREKKEKEQKEKDK.

Belongs to the peptidase T1A family. As to quaternary structure, the 26S proteasome consists of a 20S proteasome core and two 19S regulatory subunits. The 20S proteasome core is a barrel-shaped complex made of 28 subunits that are arranged in four stacked rings. The two outer rings are each formed by seven alpha subunits, and the two inner rings are formed by seven beta subunits. The proteolytic activity is exerted by three beta-subunits PSMB5, PSMB6 and PSMB7.

The protein resides in the cytoplasm. Its subcellular location is the nucleus. Its function is as follows. Component of the 20S core proteasome complex involved in the proteolytic degradation of most intracellular proteins. This complex plays numerous essential roles within the cell by associating with different regulatory particles. Associated with two 19S regulatory particles, forms the 26S proteasome and thus participates in the ATP-dependent degradation of ubiquitinated proteins. The 26S proteasome plays a key role in the maintenance of protein homeostasis by removing misfolded or damaged proteins that could impair cellular functions, and by removing proteins whose functions are no longer required. Associated with the PA200 or PA28, the 20S proteasome mediates ubiquitin-independent protein degradation. This type of proteolysis is required in several pathways including spermatogenesis (20S-PA200 complex) or generation of a subset of MHC class I-presented antigenic peptides (20S-PA28 complex). This Macaca fascicularis (Crab-eating macaque) protein is Proteasome subunit alpha type-4 (PSMA4).